A 307-amino-acid chain; its full sequence is Small ribosomal subunit protein uS2 (307 aa).

A disordered region spans residues 256–307 (GGEAEQAAVDATGGAATEETPAAESTGAASEAAAVSEAAEPATEQPAADAEA). Low complexity predominate over residues 259-307 (AEQAAVDATGGAATEETPAAESTGAASEAAAVSEAAEPATEQPAADAEA).

It belongs to the universal ribosomal protein uS2 family.

The chain is Small ribosomal subunit protein uS2 from Nocardioides sp. (strain ATCC BAA-499 / JS614).